Reading from the N-terminus, the 274-residue chain is Putative hydro-lyase SAV_6940 (274 aa).

This sequence belongs to the D-glutamate cyclase family.

This chain is Putative hydro-lyase SAV_6940, found in Streptomyces avermitilis (strain ATCC 31267 / DSM 46492 / JCM 5070 / NBRC 14893 / NCIMB 12804 / NRRL 8165 / MA-4680).